Consider the following 309-residue polypeptide: tRNA-cytidine(32) 2-sulfurtransferase (309 aa).

Residues 57–62 (SGGKDS) carry the PP-loop motif motif. Residues Cys132, Cys135, and Cys223 each coordinate [4Fe-4S] cluster.

Belongs to the TtcA family. As to quaternary structure, homodimer. The cofactor is Mg(2+). [4Fe-4S] cluster is required as a cofactor.

The protein resides in the cytoplasm. It catalyses the reaction cytidine(32) in tRNA + S-sulfanyl-L-cysteinyl-[cysteine desulfurase] + AH2 + ATP = 2-thiocytidine(32) in tRNA + L-cysteinyl-[cysteine desulfurase] + A + AMP + diphosphate + H(+). It functions in the pathway tRNA modification. Catalyzes the ATP-dependent 2-thiolation of cytidine in position 32 of tRNA, to form 2-thiocytidine (s(2)C32). The sulfur atoms are provided by the cysteine/cysteine desulfurase (IscS) system. The polypeptide is tRNA-cytidine(32) 2-sulfurtransferase (Variovorax paradoxus (strain S110)).